We begin with the raw amino-acid sequence, 151 residues long: Metallothiol transferase FosB (151 aa).

Residues 4-119 enclose the VOC domain; sequence SINHVTYSVS…DGHKFELHTG (116 aa). Mg(2+) is bound by residues H7, H66, and E115. E115 (proton donor/acceptor) is an active-site residue.

It belongs to the fosfomycin resistance protein family. FosB subfamily. Homodimer. Mg(2+) serves as cofactor.

It is found in the cytoplasm. Functionally, metallothiol transferase which confers resistance to fosfomycin by catalyzing the addition of a thiol cofactor to fosfomycin. L-cysteine is probably the physiological thiol donor. The sequence is that of Metallothiol transferase FosB from Staphylococcus saprophyticus subsp. saprophyticus (strain ATCC 15305 / DSM 20229 / NCIMB 8711 / NCTC 7292 / S-41).